The sequence spans 309 residues: HPr kinase/phosphorylase (309 aa).

Catalysis depends on residues histidine 138 and lysine 159. ATP is bound at residue 153–160 (GQSGVGKS). Serine 160 is a binding site for Mg(2+). Aspartate 177 serves as the catalytic Proton acceptor; for phosphorylation activity. Proton donor; for dephosphorylation activity. The segment at 201–210 (LEIRGLGIIN) is important for the catalytic mechanism of both phosphorylation and dephosphorylation. Position 202 (glutamate 202) interacts with Mg(2+). Residue arginine 243 is part of the active site. The interval 264–269 (PVRPGR) is important for the catalytic mechanism of dephosphorylation.

It belongs to the HPrK/P family. Homohexamer. Mg(2+) is required as a cofactor.

The catalysed reaction is [HPr protein]-L-serine + ATP = [HPr protein]-O-phospho-L-serine + ADP + H(+). It catalyses the reaction [HPr protein]-O-phospho-L-serine + phosphate + H(+) = [HPr protein]-L-serine + diphosphate. Its function is as follows. Catalyzes the ATP- as well as the pyrophosphate-dependent phosphorylation of a specific serine residue in HPr, a phosphocarrier protein of the phosphoenolpyruvate-dependent sugar phosphotransferase system (PTS). HprK/P also catalyzes the pyrophosphate-producing, inorganic phosphate-dependent dephosphorylation (phosphorolysis) of seryl-phosphorylated HPr (P-Ser-HPr). The two antagonistic activities of HprK/P are regulated by several intracellular metabolites, which change their concentration in response to the absence or presence of rapidly metabolisable carbon sources (glucose, fructose, etc.) in the growth medium. Also phosphorylates/dephosphorylates the HPr-like catabolite repression protein crh on a specific serine residue. Therefore, by controlling the phosphorylation state of HPr and crh, HPrK/P is a sensor enzyme that plays a major role in the regulation of carbon metabolism and sugar transport: it mediates carbon catabolite repression (CCR), and regulates PTS-catalyzed carbohydrate uptake and inducer exclusion. This Bacillus cereus (strain G9842) protein is HPr kinase/phosphorylase.